The sequence spans 320 residues: Cytochrome f (320 aa).

The first 35 residues, 1–35 (MQTRKTFSWIKEQITRSISASLMIYIITRTSISSA), serve as a signal peptide directing secretion. Heme-binding residues include tyrosine 36, cysteine 56, cysteine 59, and histidine 60. The helical transmembrane segment at 286 to 306 (VQGLLFFLASVILAQIFLVLK) threads the bilayer.

This sequence belongs to the cytochrome f family. In terms of assembly, the 4 large subunits of the cytochrome b6-f complex are cytochrome b6, subunit IV (17 kDa polypeptide, petD), cytochrome f and the Rieske protein, while the 4 small subunits are PetG, PetL, PetM and PetN. The complex functions as a dimer. Requires heme as cofactor.

The protein resides in the plastid. The protein localises to the chloroplast thylakoid membrane. In terms of biological role, component of the cytochrome b6-f complex, which mediates electron transfer between photosystem II (PSII) and photosystem I (PSI), cyclic electron flow around PSI, and state transitions. The chain is Cytochrome f from Panax ginseng (Korean ginseng).